Reading from the N-terminus, the 277-residue chain is Diaminopimelate epimerase (277 aa).

N13, Q46, and N66 together coordinate substrate. C75 serves as the catalytic Proton donor. Substrate-binding positions include 76 to 77 (GN), N160, N193, and 211 to 212 (ER). C220 (proton acceptor) is an active-site residue. 221 to 222 (GS) serves as a coordination point for substrate.

It belongs to the diaminopimelate epimerase family. In terms of assembly, homodimer.

It localises to the cytoplasm. It catalyses the reaction (2S,6S)-2,6-diaminopimelate = meso-2,6-diaminopimelate. It functions in the pathway amino-acid biosynthesis; L-lysine biosynthesis via DAP pathway; DL-2,6-diaminopimelate from LL-2,6-diaminopimelate: step 1/1. Catalyzes the stereoinversion of LL-2,6-diaminopimelate (L,L-DAP) to meso-diaminopimelate (meso-DAP), a precursor of L-lysine and an essential component of the bacterial peptidoglycan. The chain is Diaminopimelate epimerase from Legionella pneumophila (strain Lens).